Consider the following 80-residue polypeptide: Cell division protein ZapB (80 aa).

The stretch at Phe3–Gln80 forms a coiled coil.

Belongs to the ZapB family. In terms of assembly, homodimer. The ends of the coiled-coil dimer bind to each other, forming polymers. Interacts with FtsZ.

It is found in the cytoplasm. In terms of biological role, non-essential, abundant cell division factor that is required for proper Z-ring formation. It is recruited early to the divisome by direct interaction with FtsZ, stimulating Z-ring assembly and thereby promoting cell division earlier in the cell cycle. Its recruitment to the Z-ring requires functional FtsA or ZipA. This chain is Cell division protein ZapB, found in Photorhabdus laumondii subsp. laumondii (strain DSM 15139 / CIP 105565 / TT01) (Photorhabdus luminescens subsp. laumondii).